Reading from the N-terminus, the 160-residue chain is SsrA-binding protein (160 aa).

The protein belongs to the SmpB family.

The protein resides in the cytoplasm. Required for rescue of stalled ribosomes mediated by trans-translation. Binds to transfer-messenger RNA (tmRNA), required for stable association of tmRNA with ribosomes. tmRNA and SmpB together mimic tRNA shape, replacing the anticodon stem-loop with SmpB. tmRNA is encoded by the ssrA gene; the 2 termini fold to resemble tRNA(Ala) and it encodes a 'tag peptide', a short internal open reading frame. During trans-translation Ala-aminoacylated tmRNA acts like a tRNA, entering the A-site of stalled ribosomes, displacing the stalled mRNA. The ribosome then switches to translate the ORF on the tmRNA; the nascent peptide is terminated with the 'tag peptide' encoded by the tmRNA and targeted for degradation. The ribosome is freed to recommence translation, which seems to be the essential function of trans-translation. The chain is SsrA-binding protein from Rhodospirillum rubrum (strain ATCC 11170 / ATH 1.1.1 / DSM 467 / LMG 4362 / NCIMB 8255 / S1).